We begin with the raw amino-acid sequence, 627 residues long: Endoglucanase 5 (627 aa).

Residues 1–26 form the signal peptide; that stretch reads MRKFGGSLFGVSLLLSVLLAAATAAA. D83 functions as the Nucleophile in the catalytic mechanism. N196 is a glycosylation site (N-linked (GlcNAc...) asparagine). H416 is a catalytic residue. A glycan (N-linked (GlcNAc...) asparagine) is linked at N465. Catalysis depends on residues D468 and E477. N561 is a glycosylation site (N-linked (GlcNAc...) asparagine).

This sequence belongs to the glycosyl hydrolase 9 (cellulase E) family.

The protein localises to the secreted. It catalyses the reaction Endohydrolysis of (1-&gt;4)-beta-D-glucosidic linkages in cellulose, lichenin and cereal beta-D-glucans.. The chain is Endoglucanase 5 from Arabidopsis thaliana (Mouse-ear cress).